The primary structure comprises 416 residues: MKEIEYVQDLCSRAKKASKVLKQLSSSKKNKILLSLADLLEKRKAEILLANELDLKDGKEKKLSSALMDRLLLNEKRIFSMASAVREIAALPDPIGEVTRGITLPNGLELVTRRVPLGVVMVIYESRPNVTIDVGALSFKSGNACILRGGSEAFYSNEILIKLFHEILIKEEIDIGSVVFVDKTDRSFMIPFFQQTSLIDIVVPRGGEGLIRFVSENSKIPVVKHDKGVCNLYIDQDADPEKVIPIVINSKVQRPGVCNSTENLILHNGYPFRKELLEALAKEGVELLLDPSSLALYPKGKPVKQQDYLEEFLDLRLSVKTVSSLEEALAFIEKTSSGHTEAIVTEDLNTARIFTNSLDSAALFINCSTRFHDGGEFGLGAEVGISTGKLHVRGPMGLVHLTTTTTYVTGNGQIRG.

Belongs to the gamma-glutamyl phosphate reductase family.

It localises to the cytoplasm. The catalysed reaction is L-glutamate 5-semialdehyde + phosphate + NADP(+) = L-glutamyl 5-phosphate + NADPH + H(+). It functions in the pathway amino-acid biosynthesis; L-proline biosynthesis; L-glutamate 5-semialdehyde from L-glutamate: step 2/2. Catalyzes the NADPH-dependent reduction of L-glutamate 5-phosphate into L-glutamate 5-semialdehyde and phosphate. The product spontaneously undergoes cyclization to form 1-pyrroline-5-carboxylate. The polypeptide is Gamma-glutamyl phosphate reductase (Leptospira interrogans serogroup Icterohaemorrhagiae serovar copenhageni (strain Fiocruz L1-130)).